The following is a 195-amino-acid chain: CASP-like protein Os03g0196400 (195 aa).

The Cytoplasmic portion of the chain corresponds to 1–38 (MRQQQAGGVGDGVSPGNVPVCYYGPGGRVPSSLERRAR). The chain crosses the membrane as a helical span at residues 39–59 (AAEVLLRCAACGLAVLAAALL). The Extracellular portion of the chain corresponds to 60 to 81 (GADRQTRVFFSIQKVARYTDMQ). A helical transmembrane segment spans residues 82 to 102 (SLVLLVIANGMAACYSLIQCA). Residues 103-104 (RC) are Cytoplasmic-facing. Residues 105–125 (LVMAYIVISAVAAAMEAALIG) traverse the membrane as a helical segment. The Extracellular portion of the chain corresponds to 126–150 (KYGQPEFQWMKTCHLYKRFCAQAGG). Residues 151-171 (GVACAIAASVNMVGVALISAF) traverse the membrane as a helical segment. Residues 172-195 (NLFRLYGNSNGGGKATTTTMAGGK) are Cytoplasmic-facing.

Belongs to the Casparian strip membrane proteins (CASP) family. As to quaternary structure, homodimer and heterodimers.

Its subcellular location is the cell membrane. The protein is CASP-like protein Os03g0196400 of Oryza sativa subsp. japonica (Rice).